We begin with the raw amino-acid sequence, 279 residues long: MPDNTREGSSARFVDGAIPAGLLAAVRSQRPLVHHITNGVTINDCANITICAGAAPVMAEAPEEVAGMVAAAGALVLNIGTLSAAQVEAMLIAGRRANELGIPVVLDPVGVGATEFRTATARKLLDTLDIAVLKGNAGEIGVLAGTGGSVRGVDSGGVAGDPVETARECARSTGTVVSMTGAVDVVTDGSRVFLVGNGNPAMDRLSGTGCMASSVTAAFVAVAEDYAVASAAALAAFGLAGEWGAAGARGPYTFRTALFDELAGLSPDDLAGHARIEER.

Met58 lines the substrate pocket. Residues Lys134 and Thr180 each coordinate ATP. Gly207 is a binding site for substrate.

Belongs to the Thz kinase family. Mg(2+) is required as a cofactor.

The catalysed reaction is 5-(2-hydroxyethyl)-4-methylthiazole + ATP = 4-methyl-5-(2-phosphooxyethyl)-thiazole + ADP + H(+). The protein operates within cofactor biosynthesis; thiamine diphosphate biosynthesis; 4-methyl-5-(2-phosphoethyl)-thiazole from 5-(2-hydroxyethyl)-4-methylthiazole: step 1/1. Its function is as follows. Catalyzes the phosphorylation of the hydroxyl group of 4-methyl-5-beta-hydroxyethylthiazole (THZ). The polypeptide is Hydroxyethylthiazole kinase (Methanoculleus marisnigri (strain ATCC 35101 / DSM 1498 / JR1)).